A 474-amino-acid chain; its full sequence is Lipoprotein lipase (474 aa).

Residues methionine 1–alanine 27 form the signal peptide. The interval arginine 32 to threonine 53 is interaction with GPIHBP1. Cysteine 54 and cysteine 67 are disulfide-bonded. A glycan (N-linked (GlcNAc...) asparagine) is linked at asparagine 70. Tyrosine 121 bears the 3'-nitrotyrosine mark. The Nucleophile role is filled by serine 159. Catalysis depends on aspartate 183, which acts as the Charge relay system. Tyrosine 191 is subject to 3'-nitrotyrosine. Positions 194, 197, 199, and 202 each coordinate Ca(2+). Cysteine 243 and cysteine 266 are joined by a disulfide. Positions cysteine 243 to cysteine 266 are essential for determining substrate specificity. Catalysis depends on histidine 268, which acts as the Charge relay system. Intrachain disulfides connect cysteine 291-cysteine 310 and cysteine 302-cysteine 305. One can recognise a PLAT domain in the interval phenylalanine 341 to lysine 464. At tyrosine 343 the chain carries 3'-nitrotyrosine. Residue asparagine 386 is glycosylated (N-linked (GlcNAc...) asparagine). Positions tryptophan 417–tryptophan 421 are important for interaction with lipoprotein particles. Positions arginine 430 to lysine 434 are important for heparin binding. An interaction with GPIHBP1 region spans residues isoleucine 443–aspartate 467. An intrachain disulfide couples cysteine 445 to cysteine 465.

It belongs to the AB hydrolase superfamily. Lipase family. Homodimer. Interacts with GPIHBP1 with 1:1 stoichiometry. Interacts with APOC2; the interaction activates LPL activity in the presence of lipids. Interaction with heparan sulfate proteoglycans is required to protect LPL against loss of activity. Associates with lipoprotein particles in blood plasma. Interacts with LMF1 and SEL1L; interaction with SEL1L is required to prevent aggregation of newly synthesized LPL in the endoplasmic reticulum (ER), and for normal export of LPL from the ER to the extracellular space. Interacts with SORL1; SORL1 acts as a sorting receptor, promoting LPL localization to endosomes and later to lysosomes, leading to degradation of newly synthesized LPL. In terms of processing, tyrosine nitration after lipopolysaccharide (LPS) challenge down-regulates the lipase activity. N-glycosylated. Detected in white and brown adipose tissue and heart muscle, especially at the lumenal surface of capillaries. Detected on capillary endothelium in the lactating mammary gland. Detected in blood plasma (at protein level). Expressed in liver, epididymal fat, heart, psoas muscle, lactating mammary gland, adrenal, lung, and ovary. Highest levels in heart and adrenal gland.

It localises to the cell membrane. Its subcellular location is the secreted. The protein resides in the extracellular space. The protein localises to the extracellular matrix. The enzyme catalyses a triacylglycerol + H2O = a diacylglycerol + a fatty acid + H(+). It carries out the reaction a 1,2-diacyl-sn-glycero-3-phosphocholine + H2O = a 2-acyl-sn-glycero-3-phosphocholine + a fatty acid + H(+). The catalysed reaction is 1,2,3-tri-(9Z-octadecenoyl)-glycerol + H2O = di-(9Z)-octadecenoylglycerol + (9Z)-octadecenoate + H(+). It catalyses the reaction 1,2-di-(9Z-octadecenoyl)-sn-glycero-3-phosphocholine + H2O = (9Z-octadecenoyl)-sn-glycero-3-phosphocholine + (9Z)-octadecenoate + H(+). The enzyme catalyses 1,2,3-tributanoylglycerol + H2O = dibutanoylglycerol + butanoate + H(+). It carries out the reaction 1,2-dihexadecanoyl-sn-glycero-3-phosphocholine + H2O = hexadecanoyl-sn-glycero-3-phosphocholine + hexadecanoate + H(+). Its activity is regulated as follows. The apolipoprotein APOC2 acts as a coactivator of LPL activity. Ca(2+) binding promotes protein stability and formation of the active homodimer. Interaction with GPIHBP1 protects LPL against inactivation by ANGPTL4. Its function is as follows. Key enzyme in triglyceride metabolism. Catalyzes the hydrolysis of triglycerides from circulating chylomicrons and very low density lipoproteins (VLDL), and thereby plays an important role in lipid clearance from the blood stream, lipid utilization and storage. Although it has both phospholipase and triglyceride lipase activities it is primarily a triglyceride lipase with low but detectable phospholipase activity. Mediates margination of triglyceride-rich lipoprotein particles in capillaries. Recruited to its site of action on vascular endothelium by binding to GPIHBP1 and cell surface heparan sulfate proteoglycans. This is Lipoprotein lipase (Lpl) from Mus musculus (Mouse).